We begin with the raw amino-acid sequence, 653 residues long: Protease 1 (653 aa).

Positions 1 to 20 (MKRICGSLLLLGLSISAALA) form a signal peptide, or 27. A propeptide spanning residues 21–205 (APASRPAAFD…RRLAAASGEK (185 aa)) is cleaved from the precursor. Cystine bridges form between Cys-211-Cys-421, Cys-217-Cys-285, and Cys-241-Cys-263. Active-site charge relay system residues include His-262, Asp-318, and Ser-399. Positions 474 to 553 (NTPPVANFTS…TNTKTGSVTV (80 aa)) constitute a PKD domain. Residues 474–653 (NTPPVANFTS…AAQRAPGSCG (180 aa)) constitute a propeptide, thr/Ser-rich. The P/Homo B domain occupies 555–653 (GGPGAQTYTN…AAQRAPGSCG (99 aa)).

The protein belongs to the peptidase S1 family. Three disulfide bonds are present.

It is found in the secreted. It carries out the reaction Preferential cleavage: Lys-|-Xaa, including Lys-|-Pro.. This chain is Protease 1, found in Achromobacter lyticus.